Here is a 709-residue protein sequence, read N- to C-terminus: DCC-interacting protein 13-alpha (709 aa).

The required for RAB5A binding stretch occupies residues 1–428; the sequence is MPGIDKLPIE…RPPTARTSSS (428 aa). In terms of domain architecture, BAR spans 3–268; that stretch reads GIDKLPIEET…DPLYVPDPDP (266 aa). Residues 215–259 adopt a coiled-coil conformation; it reads SENLNEQLEEFLANIGTSVQNVRREMDSDIETMQQTIEDLEVASD. In terms of domain architecture, PH spans 277 to 375; it reads LTRKAGYLNA…WICTINNISK (99 aa). 3 disordered regions span residues 397–434, 467–491, and 645–709; these read AVTP…LGSE, GQAK…STKS, and VKEK…ESEA. The residue at position 399 (T399) is a Phosphothreonine. Residue S401 is modified to Phosphoserine. The F&amp;H signature appears at 403–414; it reads SFQQRHESLRPA. At S410 the chain carries Phosphoserine; by PKA. The region spanning 496-656 is the PID domain; it reads SILHQLFIVR…EKQQKELNKQ (161 aa). Residues 621 to 673 adopt a coiled-coil conformation; it reads LAKQIALHAELDRRASEKQKEIERVKEKQQKELNKQKQIEKDLEEQSRLIAAS. Residues 645-667 are compositionally biased toward basic and acidic residues; it reads VKEKQQKELNKQKQIEKDLEEQS. A compositionally biased stretch (polar residues) spans 674-693; it reads SRPNQASSEGQFVVLSSSQS. Phosphoserine is present on residues S693 and S696. The span at 700–709 shows a compositional bias: basic and acidic residues; that stretch reads EGGKKRESEA.

Homodimer. Binds RAB5A/Rab5 through an N-terminal domain. This interaction is essential for its recruitment to endosomal membranes as well as its role in cell proliferation. Binds DCC and the catalytic domain of the inactive form of AKT2 through its PID domain. Binds PIK3CA and subunits of the NuRD/MeCP1 complex. Interacts with OCRL and INPP5B. Interacts with NTRK2. Interacts with APPL2; interaction is independent of follicle stimulating hormone stimulation; interaction is decreased by adiponectin in a time-dependent manner. Forms a complex with APPL2 and RUVBL2. Forms a complex comprising APPL2, RUVBL2, CTNNB1, HDAC1 and HDAC2; interaction reduces interaction between CTNNB1, HDAC1, HDAC2 and RUVBL2 leading to the decrease of deacetylase activity of this complex; affects the recruitment of repressive complexes to the Wnt target genes. Interacts with ANXA2. Interacts with TGFBR1; interaction is TGF beta dependent; mediates trafficking of the TGFBR1 from the endosomes to the nucleus via microtubules in a TRAF6-dependent manner. Interacts with PRKCZ. Interacts with PIK3R1 and APPL2. Interacts with ADIPOR1; ADIPOQ enhances this interaction; inhibites adiponectin-stimulated binding of APPL2 to ADIPOR1. Phosphorylation at Ser-410 by PKA severely impairs binding to OCRL. In terms of tissue distribution, high levels in heart, ovary, pancreas and skeletal muscle.

Its subcellular location is the early endosome membrane. The protein resides in the nucleus. It localises to the cytoplasm. The protein localises to the endosome. It is found in the cell projection. Its subcellular location is the ruffle. The protein resides in the cytoplasmic vesicle. It localises to the phagosome. Its function is as follows. Multifunctional adapter protein that binds to various membrane receptors, nuclear factors and signaling proteins to regulate many processes, such as cell proliferation, immune response, endosomal trafficking and cell metabolism. Regulates signaling pathway leading to cell proliferation through interaction with RAB5A and subunits of the NuRD/MeCP1 complex. Functions as a positive regulator of innate immune response via activation of AKT1 signaling pathway by forming a complex with APPL1 and PIK3R1. Inhibits Fc-gamma receptor-mediated phagocytosis through PI3K/Akt signaling in macrophages. Regulates TLR4 signaling in activated macrophages. Involved in trafficking of the TGFBR1 from the endosomes to the nucleus via microtubules in a TRAF6-dependent manner. Plays a role in cell metabolism by regulating adiponecting and insulin signaling pathways. Required for fibroblast migration through HGF cell signaling. Positive regulator of beta-catenin/TCF-dependent transcription through direct interaction with RUVBL2/reptin resulting in the relief of RUVBL2-mediated repression of beta-catenin/TCF target genes by modulating the interactions within the beta-catenin-reptin-HDAC complex. The chain is DCC-interacting protein 13-alpha from Homo sapiens (Human).